The following is a 322-amino-acid chain: Protein SEC13 homolog (322 aa).

The residue at position 2 (V2) is an N-acetylvaline. WD repeat units lie at residues 11 to 50 (SHEDMIHDAQMDYYGTRLATCSSDRSVKIFDVRNGGQILI), 55 to 96 (GHEG…WEKS), 101 to 144 (GHDS…EVKK), 148 to 204 (AHTI…QWKE), 210 to 253 (AHSD…SNTW), and 260 to 299 (KFNDVVWHVSWSITANILAVSGGDNKVTLWKESVDGQWVC). S184 carries the post-translational modification Phosphoserine. A Phosphoserine modification is found at S309.

It belongs to the WD repeat SEC13 family. At the nuclear pore: component of the Y-shaped Nup107-160 subcomplex of the nuclear pore complex (NPC). The Nup107-160 subcomplex includes NUP160, NUP133, NUP107, NUP98, NUP85, NUP43, NUP37, SEH1 and SEC13. At the COPII coat complex: interacts with SEC31A and SEC31B. Interacts with SEC16A. Interacts with SEC16B. Component of the GATOR2 subcomplex, composed of MIOS, SEC13, SEH1L, WDR24 and WDR59. The GATOR2 complex interacts with CASTOR1 and CASTOR2; the interaction is negatively regulated by arginine. The GATOR2 complex interacts with SESN1, SESN2 and SESN3; the interaction is negatively regulated by amino acids.

The protein localises to the cytoplasmic vesicle. It is found in the COPII-coated vesicle membrane. The protein resides in the endoplasmic reticulum membrane. Its subcellular location is the nucleus. It localises to the nuclear pore complex. The protein localises to the lysosome membrane. With respect to regulation, the GATOR2 complex is negatively regulated by the upstream amino acid sensors CASTOR1 and SESN2, which sequester the GATOR2 complex in absence of amino acids. In the presence of abundant amino acids, GATOR2 is released from CASTOR1 and SESN2 and activated. Functions as a component of the nuclear pore complex (NPC) and the COPII coat. At the endoplasmic reticulum, SEC13 is involved in the biogenesis of COPII-coated vesicles. Required for the exit of adipsin (CFD/ADN), an adipocyte-secreted protein from the endoplasmic reticulum. Functionally, as a component of the GATOR2 complex, functions as an activator of the amino acid-sensing branch of the mTORC1 signaling pathway. The GATOR2 complex indirectly activates mTORC1 through the inhibition of the GATOR1 subcomplex. GATOR2 probably acts as an E3 ubiquitin-protein ligase toward GATOR1. In the presence of abundant amino acids, the GATOR2 complex mediates ubiquitination of the NPRL2 core component of the GATOR1 complex, leading to GATOR1 inactivation. In the absence of amino acids, GATOR2 is inhibited, activating the GATOR1 complex. Within the GATOR2 complex, SEC13 and SEH1L are required to stabilize the complex. The sequence is that of Protein SEC13 homolog from Homo sapiens (Human).